Here is a 380-residue protein sequence, read N- to C-terminus: Queuine tRNA-ribosyltransferase (380 aa).

D95 serves as the catalytic Proton acceptor. Substrate contacts are provided by residues 95 to 99 (DSGGF), D149, Q192, and G219. The RNA binding stretch occupies residues 250–256 (GVGSPDS). Residue D269 is the Nucleophile of the active site. An RNA binding; important for wobble base 34 recognition region spans residues 274–278 (TRIGR). The Zn(2+) site is built by C307, C309, C312, and H338.

It belongs to the queuine tRNA-ribosyltransferase family. In terms of assembly, homodimer. Within each dimer, one monomer is responsible for RNA recognition and catalysis, while the other monomer binds to the replacement base PreQ1. The cofactor is Zn(2+).

The enzyme catalyses 7-aminomethyl-7-carbaguanine + guanosine(34) in tRNA = 7-aminomethyl-7-carbaguanosine(34) in tRNA + guanine. It participates in tRNA modification; tRNA-queuosine biosynthesis. Catalyzes the base-exchange of a guanine (G) residue with the queuine precursor 7-aminomethyl-7-deazaguanine (PreQ1) at position 34 (anticodon wobble position) in tRNAs with GU(N) anticodons (tRNA-Asp, -Asn, -His and -Tyr). Catalysis occurs through a double-displacement mechanism. The nucleophile active site attacks the C1' of nucleotide 34 to detach the guanine base from the RNA, forming a covalent enzyme-RNA intermediate. The proton acceptor active site deprotonates the incoming PreQ1, allowing a nucleophilic attack on the C1' of the ribose to form the product. After dissociation, two additional enzymatic reactions on the tRNA convert PreQ1 to queuine (Q), resulting in the hypermodified nucleoside queuosine (7-(((4,5-cis-dihydroxy-2-cyclopenten-1-yl)amino)methyl)-7-deazaguanosine). The protein is Queuine tRNA-ribosyltransferase of Geobacillus kaustophilus (strain HTA426).